A 171-amino-acid polypeptide reads, in one-letter code: Protein ups1 homolog (171 aa).

The required for mitochondrial targeting stretch occupies residues 1–79 (MTAICTDKTE…LNVNKSYILE (79 aa)). The 170-residue stretch at 2–171 (TAICTDKTEL…YVIQQKFQPS (170 aa)) folds into the PRELI/MSF1 domain.

The protein localises to the mitochondrion inner membrane. The protein resides in the mitochondrion intermembrane space. Functionally, required for maintenance of normal mitochondrial morphology as well as PCP1-dependent processing of MGM1. This Schizosaccharomyces pombe (strain 972 / ATCC 24843) (Fission yeast) protein is Protein ups1 homolog.